The following is a 419-amino-acid chain: Interferon regulatory factor 3 (419 aa).

Residue Thr3 is modified to Phosphothreonine. Residues 5-111 constitute a DNA-binding region (IRF tryptophan pentad repeat); it reads KPRILPWLVS…DPHKVYEFVT (107 aa). At Ser14 the chain carries Phosphoserine. A Phosphothreonine modification is found at Thr75. Phosphoserine occurs at positions 97, 123, and 135. The interval 140 to 419 is mediates interaction with ZDHHC11; that stretch reads PKLFDGLILG…DMDFQATGNI (280 aa). Lys188 participates in a covalent cross-link: Glycyl lysine isopeptide (Lys-Gly) (interchain with G-Cter in ISG15). An interaction with HERC5 region spans residues 194 to 353; sequence EQWEFEVTAF…MWPQDQPWVK (160 aa). Thr230, Thr237, and Thr246 each carry phosphothreonine. Residues Lys353 and Lys359 each participate in a glycyl lysine isopeptide (Lys-Gly) (interchain with G-Cter in ISG15) cross-link. Lys359 is modified (N6-acetyllysine). Ser378 bears the Phosphoserine mark. The residue at position 379 (Ser379) is a Diphosphoserine. A Phosphoserine; by TBK1 modification is found at Ser379. Ser388 is subject to Phosphoserine; by IKKE. At Ser390 the chain carries Phosphoserine. At Thr396 the chain carries Phosphothreonine.

This sequence belongs to the IRF family. Monomer. Homodimer; phosphorylation-induced. Interacts (when phosphorylated) with CREBBP. Interacts with MAVS (via phosphorylated pLxIS motif). Interacts with TICAM1 (via phosphorylated pLxIS motif). Interacts with STING1 (via phosphorylated pLxIS motif). Interacts with IKBKE and TBK1. Interacts with TICAM2. Interacts with RBCK1. Interacts with HERC5. Interacts with DDX3X; the interaction allows the phosphorylation and activation of IRF3 by IKBKE. Interacts with TRIM21 and ULK1, in the presence of TRIM21; this interaction leads to IRF3 degradation by autophagy. Interacts with RIOK3; RIOK3 probably mediates the interaction of TBK1 with IRF3. Interacts with ILRUN; the interaction inhibits IRF3 binding to its DNA consensus sequence. Interacts with LYAR; this interaction impairs IRF3 DNA-binding activity. Interacts with TRAF3. Interacts with ZDHHC11; ZDHHC11 recruits IRF3 to STING1 upon DNA virus infection and thereby promotes IRF3 activation. Interacts with HSP90AA1; the interaction mediates IRF3 association with TOMM70. Interacts with BCL2; the interaction decreases upon Sendai virus infection. Interacts with BAX; the interaction is direct, increases upon virus infection and mediates the formation of the apoptosis complex TOMM70:HSP90AA1:IRF3:BAX. Interacts with DDX56. Interacts with NBR1. Post-translationally, constitutively phosphorylated on many Ser/Thr residues. Activated following phosphorylation by TBK1 and IKBKE. Innate adapter proteins, such as MAVS, STING1 or TICAM1, are first activated by viral RNA, cytosolic DNA, and bacterial lipopolysaccharide (LPS), respectively, leading to activation of the kinases TBK1 and IKBKE. These kinases then phosphorylate the adapter proteins on the pLxIS motif, leading to recruitment of IRF3, thereby licensing IRF3 for phosphorylation by TBK1. Phosphorylation at Ser-379 is followed by pyrophosphorylation at the same residue, promoting phosphorylation at Ser-388. Phosphorylated IRF3 dissociates from the adapter proteins, dimerizes, and then enters the nucleus to induce IFNs. Pyrophosphorylated by UAP1 following phosphorylation at Ser-379 by TBK1. Pyrophosphorylation promotes subsequent phosphorylation at Ser-388, leading to homodimerization of IRF3. In terms of processing, acetylation at Lys-359 by KAT8 inhibits recruimtent to promoters and transcription factor activity. Acetylation by KAT8 is promoted by phosphorylation at Ser-388. Post-translationally, ubiquitinated; ubiquitination involves RBCK1 leading to proteasomal degradation. Polyubiquitinated; ubiquitination involves TRIM21 leading to proteasomal degradation. Ubiquitinated by UBE3C, leading to its degradation. Deubiquitinated by USP5 on both 'Lys-48'-linked unanchored and 'Lys-63'-linked anchored polyubiquitin, leading to inhibition of anti-RNA viral innate immunity. ISGylated by HERC5 resulting in sustained IRF3 activation and in the inhibition of IRF3 ubiquitination by disrupting PIN1 binding. The phosphorylation state of IRF3 does not alter ISGylation. In terms of processing, proteolytically cleaved by apoptotic caspases during apoptosis, leading to its inactivation. Cleavage by CASP3 during virus-induced apoptosis inactivates it, preventing cytokine overproduction.

The protein localises to the cytoplasm. The protein resides in the nucleus. It is found in the mitochondrion. With respect to regulation, in the absence of viral infection, maintained as a monomer in an autoinhibited state. Phosphorylation by TBK1 and IKBKE disrupts this autoinhibition leading to the liberation of the DNA-binding and dimerization activities and its nuclear localization where it can activate type I IFN and ISG genes. Phosphorylation and activation follow the following steps: innate adapter proteins, such as MAVS, STING1 or TICAM1, are first activated by viral RNA, cytosolic DNA and bacterial lipopolysaccharide (LPS), respectively, leading to activation of the kinases TBK1 and IKBKE. These kinases then phosphorylate the adapter proteins on their pLxIS motif, leading to recruitment of IRF3, thereby licensing IRF3 for phosphorylation by TBK1. Phosphorylated IRF3 dissociates from the adapter proteins, dimerizes, and then enters the nucleus to induce IFNs. In terms of biological role, key transcriptional regulator of type I interferon (IFN)-dependent immune responses which plays a critical role in the innate immune response against DNA and RNA viruses. Regulates the transcription of type I IFN genes (IFN-alpha and IFN-beta) and IFN-stimulated genes (ISG) by binding to an interferon-stimulated response element (ISRE) in their promoters. Acts as a more potent activator of the IFN-beta (IFNB) gene than the IFN-alpha (IFNA) gene and plays a critical role in both the early and late phases of the IFNA/B gene induction. Found in an inactive form in the cytoplasm of uninfected cells and following viral infection, double-stranded RNA (dsRNA), or toll-like receptor (TLR) signaling, is phosphorylated by IKBKE and TBK1 kinases. This induces a conformational change, leading to its dimerization and nuclear localization and association with CREB binding protein (CREBBP) to form dsRNA-activated factor 1 (DRAF1), a complex which activates the transcription of the type I IFN and ISG genes. Can activate distinct gene expression programs in macrophages and can induce significant apoptosis in primary macrophages. The sequence is that of Interferon regulatory factor 3 (Irf3) from Mus musculus (Mouse).